Here is a 342-residue protein sequence, read N- to C-terminus: Methylthioribose-1-phosphate isomerase (342 aa).

Substrate is bound by residues 44 to 46 (RGA), R87, and Q194. Catalysis depends on D235, which acts as the Proton donor. 245 to 246 (NK) contacts substrate.

Belongs to the eIF-2B alpha/beta/delta subunits family. MtnA subfamily.

The catalysed reaction is 5-(methylsulfanyl)-alpha-D-ribose 1-phosphate = 5-(methylsulfanyl)-D-ribulose 1-phosphate. It functions in the pathway amino-acid biosynthesis; L-methionine biosynthesis via salvage pathway; L-methionine from S-methyl-5-thio-alpha-D-ribose 1-phosphate: step 1/6. In terms of biological role, catalyzes the interconversion of methylthioribose-1-phosphate (MTR-1-P) into methylthioribulose-1-phosphate (MTRu-1-P). The protein is Methylthioribose-1-phosphate isomerase of Acetivibrio thermocellus (strain ATCC 27405 / DSM 1237 / JCM 9322 / NBRC 103400 / NCIMB 10682 / NRRL B-4536 / VPI 7372) (Clostridium thermocellum).